A 316-amino-acid chain; its full sequence is Peroxidase 67 (316 aa).

Positions 1-19 (MLKVVLLMMIMMLASQSEA) are cleaved as a signal peptide. Position 20 is a pyrrolidone carboxylic acid (glutamine 20). Cystine bridges form between cysteine 30/cysteine 110, cysteine 63/cysteine 68, cysteine 116/cysteine 312, and cysteine 196/cysteine 221. Histidine 61 (proton acceptor) is an active-site residue. Aspartate 62, valine 65, glycine 67, aspartate 69, and serine 71 together coordinate Ca(2+). Proline 159 contributes to the substrate binding site. A heme b-binding site is contributed by histidine 189. Ca(2+) is bound at residue threonine 190. A glycan (N-linked (GlcNAc...) asparagine) is linked at asparagine 205. 3 residues coordinate Ca(2+): aspartate 236, serine 239, and aspartate 244.

The protein belongs to the peroxidase family. Classical plant (class III) peroxidase subfamily. It depends on heme b as a cofactor. Ca(2+) serves as cofactor.

Its subcellular location is the secreted. The catalysed reaction is 2 a phenolic donor + H2O2 = 2 a phenolic radical donor + 2 H2O. Functionally, removal of H(2)O(2), oxidation of toxic reductants, biosynthesis and degradation of lignin, suberization, auxin catabolism, response to environmental stresses such as wounding, pathogen attack and oxidative stress. These functions might be dependent on each isozyme/isoform in each plant tissue. This Arabidopsis thaliana (Mouse-ear cress) protein is Peroxidase 67 (PER67).